The following is a 198-amino-acid chain: Nuclear transcription factor Y subunit A-4 (198 aa).

The tract at residues 1–47 (MTSSVHELSDNNESHAKKERPDSQTRPQVPSGRSSESIDTNSVYSEP) is disordered. A compositionally biased stretch (basic and acidic residues) spans 7–23 (ELSDNNESHAKKERPDS). Over residues 24–44 (QTRPQVPSGRSSESIDTNSVY) the composition is skewed to polar residues. The Subunit association domain (SAD) signature appears at 101-124 (FVNAKQYHGILRRRQSRAKLEARN). A DNA-binding region (NFYA/HAP2-type) is located at residues 131–156 (KPYMHESRHLHAIRRPRGCGGRFLNA). The tract at residues 136–198 (ESRHLHAIRR…MATSGPNGRS (63 aa)) is disordered. Residues 156–166 (AKKENGDHKEE) show a composition bias toward basic and acidic residues.

Belongs to the NFYA/HAP2 subunit family. As to quaternary structure, heterotrimeric transcription factor composed of three components, NF-YA, NF-YB and NF-YC. NF-YB and NF-YC must interact and dimerize for NF-YA association and DNA binding. In terms of tissue distribution, expressed in stems, caulines, and senescent flowers.

It localises to the nucleus. Stimulates the transcription of various genes by recognizing and binding to a CCAAT motif in promoters. The chain is Nuclear transcription factor Y subunit A-4 (NFYA4) from Arabidopsis thaliana (Mouse-ear cress).